The primary structure comprises 336 residues: N6-methyladenosine RNA methyltransferase MTA1 (336 aa).

Positions 61 to 83 (LISSEPPHLPFKTPEPKAGSGGL) are disordered.

It belongs to the MT-A70-like family.

It carries out the reaction an adenosine in mRNA + S-adenosyl-L-methionine = an N(6)-methyladenosine in mRNA + S-adenosyl-L-homocysteine + H(+). N6-methyladenosine RNA methyltransferase that plays a crucial role in fungal phenotypic traits, virulence, and stress tolerance. Mediates the methylation of mRNAs to produce N6-methyladenosine (m6A)-containing mRNAs. M6A is a modification present at internal sites of mRNAs and some non-coding RNAs and plays a role in mRNA stability and processing. Mediates specifically acid phosphatase APHA mRNA stability through a YTHDF1-dependent m6A modification of the A1306, A1341, and A1666 key methylation modification sites. Also mediates the stability of the transcription factor ZAP1 mRNA via modification of residue A1935 localized in the 3'UTR. The protein is N6-methyladenosine RNA methyltransferase MTA1 of Cryphonectria parasitica (strain ATCC 38755 / EP155).